We begin with the raw amino-acid sequence, 396 residues long: Acetate kinase (396 aa).

Residue asparagine 7 participates in Mg(2+) binding. ATP is bound at residue lysine 14. Residue arginine 91 participates in substrate binding. The active-site Proton donor/acceptor is the aspartate 148. Residues 208–212 (HLGNG), 283–285 (DFR), and 331–335 (GIGEN) each bind ATP. Glutamate 384 is a Mg(2+) binding site.

The protein belongs to the acetokinase family. Homodimer. Mg(2+) serves as cofactor. The cofactor is Mn(2+).

It is found in the cytoplasm. It carries out the reaction acetate + ATP = acetyl phosphate + ADP. It functions in the pathway metabolic intermediate biosynthesis; acetyl-CoA biosynthesis; acetyl-CoA from acetate: step 1/2. In terms of biological role, catalyzes the formation of acetyl phosphate from acetate and ATP. Can also catalyze the reverse reaction. The protein is Acetate kinase of Desulforamulus reducens (strain ATCC BAA-1160 / DSM 100696 / MI-1) (Desulfotomaculum reducens).